The chain runs to 129 residues: Ribosome-binding factor A (129 aa).

It belongs to the RbfA family. In terms of assembly, monomer. Binds 30S ribosomal subunits, but not 50S ribosomal subunits or 70S ribosomes.

The protein localises to the cytoplasm. Functionally, one of several proteins that assist in the late maturation steps of the functional core of the 30S ribosomal subunit. Associates with free 30S ribosomal subunits (but not with 30S subunits that are part of 70S ribosomes or polysomes). Required for efficient processing of 16S rRNA. May interact with the 5'-terminal helix region of 16S rRNA. This is Ribosome-binding factor A from Stutzerimonas stutzeri (strain A1501) (Pseudomonas stutzeri).